Here is a 184-residue protein sequence, read N- to C-terminus: Protein C8 (184 aa).

Residues 1–21 form the signal peptide; the sequence is MSSIRFIACLYLISIFGNCHE.

Belongs to the poxviridae C8 protein family.

This Vaccinia virus (strain Copenhagen) (VACV) protein is Protein C8.